The chain runs to 319 residues: Dehydrogenase/reductase SDR family member 9 (319 aa).

Residues 1-17 (MLFWVLGLLILCGFLWT) form the signal peptide. Residues 34 to 58 (ITGCDSGFGNLAARTFDKKGFHVIA) and Asp83 each bind NAD(+). Ser164 serves as a coordination point for substrate. Catalysis depends on Tyr176, which acts as the Proton acceptor. An NAD(+)-binding site is contributed by Lys180.

It belongs to the short-chain dehydrogenases/reductases (SDR) family. In terms of assembly, homotetramer. In terms of tissue distribution, highly expressed in trachea and epidermis. Detected at lower levels in spinal cord, bone marrow, brain, tongue, esophagus, heart, colon, testis, placenta, lung, skeletal muscle and lymph node.

It localises to the microsome membrane. The protein localises to the endoplasmic reticulum membrane. The catalysed reaction is 3beta-hydroxy-5alpha-pregnane-20-one + NAD(+) = 5alpha-pregnane-3,20-dione + NADH + H(+). It catalyses the reaction 17beta-hydroxy-5alpha-androstan-3-one + NAD(+) = 5alpha-androstan-3,17-dione + NADH + H(+). It carries out the reaction androsterone + NAD(+) = 5alpha-androstan-3,17-dione + NADH + H(+). The enzyme catalyses 5alpha-androstane-3alpha,17beta-diol + NAD(+) = 17beta-hydroxy-5alpha-androstan-3-one + NADH + H(+). The catalysed reaction is all-trans-retinol + NAD(+) = all-trans-retinal + NADH + H(+). It catalyses the reaction 3alpha-hydroxy-5alpha-pregnan-20-one + NAD(+) = 5alpha-pregnane-3,20-dione + NADH + H(+). 3-alpha-hydroxysteroid dehydrogenase that converts 3-alpha-tetrahydroprogesterone (allopregnanolone) to dihydroxyprogesterone and 3-alpha-androstanediol to dihydroxyprogesterone. Also plays a role in the biosynthesis of retinoic acid from retinaldehyde. Can utilize both NADH and NADPH. The sequence is that of Dehydrogenase/reductase SDR family member 9 (DHRS9) from Homo sapiens (Human).